A 49-amino-acid polypeptide reads, in one-letter code: Large ribosomal subunit protein bL33 (49 aa).

Belongs to the bacterial ribosomal protein bL33 family.

The polypeptide is Large ribosomal subunit protein bL33 (Desulforudis audaxviator (strain MP104C)).